Here is a 296-residue protein sequence, read N- to C-terminus: MPELPEVETVRRGLAPAMVGARFARVTLRRPNLRFPFPERFAERLEGTTVRELARRAKYLTAHLDSGESLILHLGMSGRFDVRMPDGSNLSPGDFYLEGALGTPKHDHVVMAFANGATVTYNDARRFGFMDLVATRDLETCRHFAAMGVEPLSDALDGAVLARLFARKITPLKAALLDQRLIAGLGNIYVCEALHRSGLHPALPAGALAKPDGAPTPKAKKLVKEIKAVLTEAVAAGGSTLRDYARPDGERGAFQHGFRVYDRVGHACPTKGCTGRIGRIVQGGRSTFFCETCQVR.

Residue P2 is the Schiff-base intermediate with DNA of the active site. E3 serves as the catalytic Proton donor. Catalysis depends on K58, which acts as the Proton donor; for beta-elimination activity. DNA-binding residues include H106, R125, and K168. The FPG-type zinc-finger motif lies at 259–295 (RVYDRVGHACPTKGCTGRIGRIVQGGRSTFFCETCQV). R285 acts as the Proton donor; for delta-elimination activity in catalysis.

It belongs to the FPG family. As to quaternary structure, monomer. Zn(2+) serves as cofactor.

It carries out the reaction Hydrolysis of DNA containing ring-opened 7-methylguanine residues, releasing 2,6-diamino-4-hydroxy-5-(N-methyl)formamidopyrimidine.. The catalysed reaction is 2'-deoxyribonucleotide-(2'-deoxyribose 5'-phosphate)-2'-deoxyribonucleotide-DNA = a 3'-end 2'-deoxyribonucleotide-(2,3-dehydro-2,3-deoxyribose 5'-phosphate)-DNA + a 5'-end 5'-phospho-2'-deoxyribonucleoside-DNA + H(+). Involved in base excision repair of DNA damaged by oxidation or by mutagenic agents. Acts as a DNA glycosylase that recognizes and removes damaged bases. Has a preference for oxidized purines, such as 7,8-dihydro-8-oxoguanine (8-oxoG). Has AP (apurinic/apyrimidinic) lyase activity and introduces nicks in the DNA strand. Cleaves the DNA backbone by beta-delta elimination to generate a single-strand break at the site of the removed base with both 3'- and 5'-phosphates. This is Formamidopyrimidine-DNA glycosylase from Methylorubrum populi (strain ATCC BAA-705 / NCIMB 13946 / BJ001) (Methylobacterium populi).